The following is a 485-amino-acid chain: Glutamyl-tRNA(Gln) amidotransferase subunit A (485 aa).

Active-site charge relay system residues include K79 and S154. Catalysis depends on S178, which acts as the Acyl-ester intermediate.

Belongs to the amidase family. GatA subfamily. Heterotrimer of A, B and C subunits.

The enzyme catalyses L-glutamyl-tRNA(Gln) + L-glutamine + ATP + H2O = L-glutaminyl-tRNA(Gln) + L-glutamate + ADP + phosphate + H(+). Functionally, allows the formation of correctly charged Gln-tRNA(Gln) through the transamidation of misacylated Glu-tRNA(Gln) in organisms which lack glutaminyl-tRNA synthetase. The reaction takes place in the presence of glutamine and ATP through an activated gamma-phospho-Glu-tRNA(Gln). The chain is Glutamyl-tRNA(Gln) amidotransferase subunit A from Clostridium botulinum (strain ATCC 19397 / Type A).